The primary structure comprises 453 residues: RuvB-like helicase 1 (453 aa).

71–78 (GGPGTGKT) is an ATP binding site.

Belongs to the RuvB family. In terms of assembly, may form heterododecamers with RVB2. Component of the SWR1 chromatin remodeling complex, the INO80 chromatin remodeling complex, and of the R2TP complex.

It is found in the nucleus. It catalyses the reaction ATP + H2O = ADP + phosphate + H(+). Its function is as follows. DNA helicase which participates in several chromatin remodeling complexes, including the SWR1 and the INO80 complexes. The SWR1 complex mediates the ATP-dependent exchange of histone H2A for the H2A variant HZT1 leading to transcriptional regulation of selected genes by chromatin remodeling. The INO80 complex remodels chromatin by shifting nucleosomes and is involved in DNA repair. Also involved in pre-rRNA processing. The chain is RuvB-like helicase 1 (RVB1) from Yarrowia lipolytica (strain CLIB 122 / E 150) (Yeast).